Reading from the N-terminus, the 450-residue chain is tRNA-2-methylthio-N(6)-dimethylallyladenosine synthase (450 aa).

Residues 3–119 (RRYYITTFGC…LGELLEQVWN (117 aa)) enclose the MTTase N-terminal domain. [4Fe-4S] cluster-binding residues include C12, C48, C82, C154, C158, and C161. The region spanning 140-377 (RDSTVTAWVN…NHLVAKIAGD (238 aa)) is the Radical SAM core domain. The TRAM domain maps to 380–444 (QRYLGREEVV…AFSLSGVPLA (65 aa)).

Belongs to the methylthiotransferase family. MiaB subfamily. In terms of assembly, monomer. [4Fe-4S] cluster serves as cofactor.

Its subcellular location is the cytoplasm. It carries out the reaction N(6)-dimethylallyladenosine(37) in tRNA + (sulfur carrier)-SH + AH2 + 2 S-adenosyl-L-methionine = 2-methylsulfanyl-N(6)-dimethylallyladenosine(37) in tRNA + (sulfur carrier)-H + 5'-deoxyadenosine + L-methionine + A + S-adenosyl-L-homocysteine + 2 H(+). In terms of biological role, catalyzes the methylthiolation of N6-(dimethylallyl)adenosine (i(6)A), leading to the formation of 2-methylthio-N6-(dimethylallyl)adenosine (ms(2)i(6)A) at position 37 in tRNAs that read codons beginning with uridine. The sequence is that of tRNA-2-methylthio-N(6)-dimethylallyladenosine synthase from Thermosynechococcus vestitus (strain NIES-2133 / IAM M-273 / BP-1).